The primary structure comprises 1032 residues: MKMADAKQKRNEQLKRWIGSETDLEPPVVKRQKTKVKFDDGAVFLAACSSGDTDEVLKLLHRGADINYANVDGLTALHQACIDDNVDMVKFLVENGANINQPDNEGWIPLHAAASCGYLDIAEFLIGQGAHVGAVNSEGDTPLDIAEEEAMEELLQNEVNRQGVDIEAARKEEERIMLRDARQWLNSGHISDVRHAKSGGTALHVAAAKGYTEVLKLLIQAGYDVNIKDYDGWTPLHAAAHWGKEEACRILVDNLCDMETVNKVGQTAFDVADEDILGYLEELQKKQNLLHSEKRDKKSPLIESTANMENNQPQKTFKNKETLIIEPEKNASRIESLEQEKADEEEEGKKDESSCSSEEDEEDDSESEAETDKTKPMASVTNAHTASTQAAPAAVTTPTLSSNQGTPTSPVKKFPTSTTKISPKEEERKDESPASWRLGLRKTGSYGALAEITASKEAQKEKDTAGVIRSASSPRLSSSLDNKEKEKDNKGTRLAYVAPTIPRRLGSTSDIEEKENRESSNLRTSSSYTRRKWEDDLKKNSSINEGSTYHRSCSFGRRQDDLISCSVPSTTSTPTVTSAAGLQKSFLSSTSTTAKTPPGSSPAGTQSSTSNRLWAEDSTEKEKDSAPTAATILVAPTVVSAAASSTTALTTTTAGTLSSTSEVRERRRSYLTPVRDEESESQRKARSRQARQSRRSTQGVTLTDLQEAEKTIGRSRSTRTREQENEEKDKEEKEKQDKEKQEEKKESEVSREDEYKQKYSRTYDETYARYRPVSTSSSSTPSSSSLSTLGSSLYASSQLNRPNSLVGITSAYSRGLTKDNEREGEKKEEEKEGEDKSQPKSIRERRRPREKRRSTGVSFWTQDSDENEQERQSDTEDGSSKRDTQTDSVSRYDSSSTSSSDRYDSLLGRSASYSYLEERKPYGSRLEKDDSTDFKKLYEQILAENEKLKAQLHDTNMELTDLKLQLEKATQRQERFADRSLLEMEKRERRALERRISEMEEELKMLPDLKADNQRLKDENGALIRVISKLSK.

The KVKF motif signature appears at Lys-35–Phe-38. ANK repeat units follow at residues Asp-39–Tyr-68, Asp-72–Gln-101, Glu-105–Ala-134, Glu-138–Val-164, Ser-198–Ile-227, and Asp-231–Thr-260. (3S)-3-hydroxyasparagine; by HIF1AN is present on residues Asn-67 and Asn-100. A (3S)-3-hydroxyasparagine; by HIF1AN modification is found at Asn-226. Disordered regions lie at residues Leu-290–Cys-553 and Ser-588–Lys-928. A compositionally biased stretch (basic and acidic residues) spans His-291–Pro-300. Ser-299 is subject to Phosphoserine. Polar residues predominate over residues Ile-302–Thr-316. Residues Lys-318–Glu-340 show a composition bias toward basic and acidic residues. A compositionally biased stretch (acidic residues) spans Ser-357–Ala-369. Residues Ala-383 to Thr-399 show a composition bias toward low complexity. Polar residues predominate over residues Leu-400–Ile-421. Ser-422 and Ser-432 each carry phosphoserine. Residues Ser-422–Ser-432 show a composition bias toward basic and acidic residues. A Phosphothreonine modification is found at Thr-443. The residue at position 445 (Ser-445) is a Phosphoserine. A Phosphotyrosine modification is found at Tyr-446. Residues Arg-469–Leu-480 are compositionally biased toward low complexity. Ser-472 carries the post-translational modification Phosphoserine; by NUAK1. Ser-473 carries the post-translational modification Phosphoserine; by CDK1. The residue at position 477 (Ser-477) is a Phosphoserine. Over residues Asp-481–Gly-491 the composition is skewed to basic and acidic residues. Ser-507 and Ser-509 each carry phosphoserine. Residues Asn-540–Arg-551 show a composition bias toward polar residues. Ser-601 is modified (phosphoserine). The segment covering Pro-602–Arg-612 has biased composition (polar residues). Positions Trp-614 to Ser-625 are enriched in basic and acidic residues. Residue Ser-618 is modified to Phosphoserine. The span at Leu-633 to Ser-661 shows a compositional bias: low complexity. Basic and acidic residues predominate over residues Val-674–Arg-683. An interaction with ROCK2 region spans residues Arg-683 to Glu-866. Residues Lys-684–Arg-694 show a composition bias toward basic residues. Phosphoserine; by PKA and PKG; in vitro occurs at positions 693 and 696. A Phosphothreonine; by ROCK1, ROCK2, CDC42BP, ZIPK/DAPK3 and RAF1 modification is found at Thr-697. Residues Arg-719–Ala-768 are compositionally biased toward basic and acidic residues. Positions Ser-774–Ser-797 are enriched in low complexity. The segment covering Gln-798–Tyr-812 has biased composition (polar residues). At Ser-804 the chain carries Phosphoserine. Residues Leu-816–Ile-842 show a composition bias toward basic and acidic residues. Residues Arg-843–Ser-854 show a composition bias toward basic residues. A Phosphoserine; by ROCK2 modification is found at Ser-854. 2 positions are modified to phosphoserine: Ser-864 and Ser-873. Over residues Gln-869 to Gln-885 the composition is skewed to basic and acidic residues. The span at Thr-886–Ser-900 shows a compositional bias: low complexity. Ser-905 and Ser-910 each carry phosphoserine. The residue at position 912 (Ser-912) is a Phosphoserine; by NUAK1. Basic and acidic residues predominate over residues Leu-916–Lys-928. At Ser-997 the chain carries Phosphoserine.

As to quaternary structure, PP1 comprises a catalytic subunit, PPP1CA, PPP1CB or PPP1CC, and one or several targeting or regulatory subunits. PPP1R12A mediates binding to myosin. Interacts with ARHA and CIT. Binds PPP1R12B, ROCK1 and IL16. Interacts directly with PRKG1. Non-covalent dimer of 2 dimers; PRKG1-PRKG1 and PPP1R12A-PPP1R12A. Interacts with SMTNL1. Interacts with PPP1CB; the interaction is direct. Interacts (when phosphorylated at Ser-445, Ser-472 and Ser-910) with 14-3-3. Interacts with ROCK1 and ROCK2. Interacts with isoform 1 and isoform 2 of ZIPK/DAPK3. Interacts with RAF1. Interacts with HIF1AN. Interacts with NCKAP1L. In terms of processing, phosphorylated on upon DNA damage, probably by ATM or ATR. Phosphorylated by CIT (Rho-associated kinase). Phosphorylated cooperatively by ROCK1 and CDC42BP on Thr-697. In vitro, phosphorylation of Ser-696 by PKA and PKG appears to prevent phosphorylation of the inhibitory site Thr-697, probably mediated by PRKG1. May be phosphorylated at Thr-697 by DMPK; may inhibit the myosin phosphatase activity. Phosphorylated at Ser-473 by CDK1 during mitosis, creating docking sites for the POLO box domains of PLK1. Subsequently, PLK1 binds and phosphorylates PPP1R12A. In terms of tissue distribution, smooth muscle. Detected in aorta, portal vein, stomach, intestine, bladder and lung.

It localises to the cytoplasm. Its subcellular location is the cytoskeleton. The protein localises to the stress fiber. Key regulator of protein phosphatase 1C (PPP1C). Mediates binding to myosin. As part of the PPP1C complex, involved in dephosphorylation of PLK1. Capable of inhibiting HIF1AN-dependent suppression of HIF1A activity. The chain is Protein phosphatase 1 regulatory subunit 12A from Rattus norvegicus (Rat).